We begin with the raw amino-acid sequence, 235 residues long: MASASKSWLPWRKMFKLGWASFVDPELAKTAFLEFAKQFYVTSSAGAILFDLKKSQGLDQLQAIEKTRKVIITEQFANQTGKWILFDKENTKRINSLAQEHITPLIKRILRLADFKNVLINVQHHKKLQKCLLWEINGLICLVESLQFMENPTAIMEWFQGLKKHCPNVAVVTISGQHKPVIEPSLTEYKAVFGSSLLSFHLDATTINNSHLVRQILEQIKIKATLKSNSKVAKS.

This is an uncharacterized protein from Mycoplasma pneumoniae (strain ATCC 29342 / M129 / Subtype 1) (Mycoplasmoides pneumoniae).